We begin with the raw amino-acid sequence, 425 residues long: Glutamyl-tRNA(Gln) amidotransferase subunit D (425 aa).

The tract at residues 53 to 84 (ENNGEAANGGNGGKNGQKEPEPAKEKVSKPGL) is disordered. Residues 68–80 (GQKEPEPAKEKVS) show a composition bias toward basic and acidic residues. Residues 85-414 (PKVSILSTGG…EKAVSMLGEN (330 aa)) enclose the Asparaginase/glutaminase domain. Active-site residues include Thr95, Thr171, Asp172, and Lys248.

This sequence belongs to the asparaginase 1 family. GatD subfamily. Heterodimer of GatD and GatE.

It catalyses the reaction L-glutamyl-tRNA(Gln) + L-glutamine + ATP + H2O = L-glutaminyl-tRNA(Gln) + L-glutamate + ADP + phosphate + H(+). Its function is as follows. Allows the formation of correctly charged Gln-tRNA(Gln) through the transamidation of misacylated Glu-tRNA(Gln) in organisms which lack glutaminyl-tRNA synthetase. The reaction takes place in the presence of glutamine and ATP through an activated gamma-phospho-Glu-tRNA(Gln). The GatDE system is specific for glutamate and does not act on aspartate. This chain is Glutamyl-tRNA(Gln) amidotransferase subunit D, found in Methanosarcina mazei (strain ATCC BAA-159 / DSM 3647 / Goe1 / Go1 / JCM 11833 / OCM 88) (Methanosarcina frisia).